A 130-amino-acid polypeptide reads, in one-letter code: Mating-type-like protein A1 (130 aa).

Positions 68–127 (TYTTRKPLPAKAKLQLVETFSKKRYLTRCEKHQLAVQCGITTNQVQIWFANRRKRSKDLN) form a DNA-binding region, homeobox.

Belongs to the MATA1 family.

It localises to the nucleus. Its function is as follows. Mating type proteins are sequence specific DNA-binding proteins that act as master switches in yeast differentiation by controlling gene expression in a cell type-specific fashion. This chain is Mating-type-like protein A1 (MTL1A1), found in Candida glabrata (strain ATCC 2001 / BCRC 20586 / JCM 3761 / NBRC 0622 / NRRL Y-65 / CBS 138) (Yeast).